The primary structure comprises 252 residues: 2-succinyl-6-hydroxy-2,4-cyclohexadiene-1-carboxylate synthase (252 aa).

Belongs to the AB hydrolase superfamily. MenH family. Monomer.

The catalysed reaction is 5-enolpyruvoyl-6-hydroxy-2-succinyl-cyclohex-3-ene-1-carboxylate = (1R,6R)-6-hydroxy-2-succinyl-cyclohexa-2,4-diene-1-carboxylate + pyruvate. It functions in the pathway quinol/quinone metabolism; 1,4-dihydroxy-2-naphthoate biosynthesis; 1,4-dihydroxy-2-naphthoate from chorismate: step 3/7. The protein operates within quinol/quinone metabolism; menaquinone biosynthesis. Functionally, catalyzes a proton abstraction reaction that results in 2,5-elimination of pyruvate from 2-succinyl-5-enolpyruvyl-6-hydroxy-3-cyclohexene-1-carboxylate (SEPHCHC) and the formation of 2-succinyl-6-hydroxy-2,4-cyclohexadiene-1-carboxylate (SHCHC). This Salmonella typhi protein is 2-succinyl-6-hydroxy-2,4-cyclohexadiene-1-carboxylate synthase.